Reading from the N-terminus, the 79-residue chain is Small serum protein 3 (79 aa).

The signal sequence occupies residues 1–19; the sequence is MKVFFILIIFSFTLATCQG. 3 cysteine pairs are disulfide-bonded: cysteine 21-cysteine 72, cysteine 39-cysteine 64, and cysteine 62-cysteine 71.

It is found in the secreted. Its function is as follows. Shows an slight inhibitory effect toward the metalloproteinase brevilysin H6, but does not inhibit the metalloproteinases thermolysin, HR1A and HR1B. This chain is Small serum protein 3, found in Protobothrops flavoviridis (Habu).